The following is a 191-amino-acid chain: Phosphoheptose isomerase (191 aa).

In terms of domain architecture, SIS spans 34–191 (IATALKDGNK…LVEEMVCERS (158 aa)). Substrate is bound at residue 49–51 (NGG). Positions 58 and 62 each coordinate Zn(2+). Substrate is bound by residues Glu62, 91 to 92 (ND), 117 to 119 (TTS), Ser122, and Gln169. Zn(2+) contacts are provided by Gln169 and His177.

It belongs to the SIS family. GmhA subfamily. Zn(2+) serves as cofactor.

Its subcellular location is the cytoplasm. The catalysed reaction is 2 D-sedoheptulose 7-phosphate = D-glycero-alpha-D-manno-heptose 7-phosphate + D-glycero-beta-D-manno-heptose 7-phosphate. It participates in carbohydrate biosynthesis; D-glycero-D-manno-heptose 7-phosphate biosynthesis; D-glycero-alpha-D-manno-heptose 7-phosphate and D-glycero-beta-D-manno-heptose 7-phosphate from sedoheptulose 7-phosphate: step 1/1. In terms of biological role, catalyzes the isomerization of sedoheptulose 7-phosphate in D-glycero-D-manno-heptose 7-phosphate. This is Phosphoheptose isomerase from Aquifex aeolicus (strain VF5).